Consider the following 113-residue polypeptide: U11-theraphotoxin-Hhn1s (113 aa).

Residues 1–21 (MNTVRVTFLLVFVLAVSLGQA) form the signal peptide. Positions 22–74 (DKDENRMEMQEKTEQGKSYLDFAENLLLQKLEELEAKLLEEDSEESRNSRQKR) are excised as a propeptide. Residues 61–83 (EEDSEESRNSRQKRCIGEGVPCD) are disordered. 3 cysteine pairs are disulfide-bonded: Cys75-Cys90, Cys82-Cys95, and Cys89-Cys110.

Belongs to the neurotoxin 14 (magi-1) family. 01 (HNTX-16) subfamily. Expressed by the venom gland.

It is found in the secreted. Probable ion channel inhibitor. In Cyriopagopus hainanus (Chinese bird spider), this protein is U11-theraphotoxin-Hhn1s.